Reading from the N-terminus, the 337-residue chain is Lipoyl synthase (337 aa).

The [4Fe-4S] cluster site is built by cysteine 81, cysteine 86, cysteine 92, cysteine 107, cysteine 111, cysteine 114, and serine 323. Positions 93–312 (FSHGTATFMI…EDYGNALGFS (220 aa)) constitute a Radical SAM core domain.

Belongs to the radical SAM superfamily. Lipoyl synthase family. It depends on [4Fe-4S] cluster as a cofactor.

It is found in the cytoplasm. It catalyses the reaction [[Fe-S] cluster scaffold protein carrying a second [4Fe-4S](2+) cluster] + N(6)-octanoyl-L-lysyl-[protein] + 2 oxidized [2Fe-2S]-[ferredoxin] + 2 S-adenosyl-L-methionine + 4 H(+) = [[Fe-S] cluster scaffold protein] + N(6)-[(R)-dihydrolipoyl]-L-lysyl-[protein] + 4 Fe(3+) + 2 hydrogen sulfide + 2 5'-deoxyadenosine + 2 L-methionine + 2 reduced [2Fe-2S]-[ferredoxin]. It functions in the pathway protein modification; protein lipoylation via endogenous pathway; protein N(6)-(lipoyl)lysine from octanoyl-[acyl-carrier-protein]: step 2/2. Its function is as follows. Catalyzes the radical-mediated insertion of two sulfur atoms into the C-6 and C-8 positions of the octanoyl moiety bound to the lipoyl domains of lipoate-dependent enzymes, thereby converting the octanoylated domains into lipoylated derivatives. In Xanthomonas campestris pv. campestris (strain B100), this protein is Lipoyl synthase.